Consider the following 143-residue polypeptide: MFMGEYRHTIDAKGRLIVPAKFREQLGDSFVVTRGMDGCLFGYTQEEWNILETKLQKLPLTKKDARAFVRFFYSAATECEIDKQGRINIPKSLRTHAALQKKCVVVGVSNRFEIWSEDRWEAFADEAEENFDDIAENMIDFDL.

SpoVT-AbrB domains are found at residues 5 to 47 (EYRH…TQEE) and 76 to 119 (ATEC…SEDR).

The protein belongs to the MraZ family. In terms of assembly, forms oligomers.

The protein resides in the cytoplasm. Its subcellular location is the nucleoid. The protein is Transcriptional regulator MraZ of Ligilactobacillus salivarius (strain UCC118) (Lactobacillus salivarius).